The chain runs to 258 residues: AACILLFPRFLLTAVMLWLLDFLCIRKKMLTMPTAEEAAGAGEGPPPDDPPVCVSDSNRMFTLESLKAVWHGQKLDFFKSAHVGSPAPNPEVIQLDGQKRLRILDFARGKRPLILNFGSCTUPPFMARLRSFRRLAADFVDIADFLLVYIEEAHPSDGWVSSDAAYSIPKHQCLQDRLRAAQLMREGAPDCPLAVDTMDNASSAAYGAYFERLYVIQEEKVMYQGGRGPEGYKISELRTWLDQYKTRLQSPGAVVIQV.

A helical; Signal-anchor for type II membrane protein transmembrane segment spans residues 1 to 20 (AACILLFPRFLLTAVMLWLL). Topologically, residues 21–258 (DFLCIRKKML…QSPGAVVIQV (238 aa)) are extracellular. Residue selenocysteine 122 is part of the active site. A non-standard amino acid (selenocysteine) is located at residue selenocysteine 122.

This sequence belongs to the iodothyronine deiodinase family. As to quaternary structure, monomer. Homodimer. May undergo minor heretodimerization with DIO1 and DIO2.

Its subcellular location is the cell membrane. It is found in the endosome membrane. It catalyses the reaction 3,3',5'-triiodo-L-thyronine + iodide + A + H(+) = L-thyroxine + AH2. It carries out the reaction 3,3'-diiodo-L-thyronine + iodide + A + H(+) = 3,3',5-triiodo-L-thyronine + AH2. The enzyme catalyses 3-iodo-L-thyronine + iodide + A + H(+) = 3,5-diiodo-L-thyronine + AH2. The catalysed reaction is L-thyronine + iodide + A + H(+) = 3-iodo-L-thyronine + AH2. It catalyses the reaction 3',5'-diiodo-L-thyronine + iodide + A + H(+) = 3,3',5'-triiodo-L-thyronine + AH2. It carries out the reaction 3'-iodo-L-thyronine + iodide + A + H(+) = 3,3'-diiodo-L-thyronine + AH2. The enzyme catalyses 3,3',5'-triiodothyronamine + iodide + A + H(+) = 3,3',5,5'-tetraiodothyronamine + AH2. The catalysed reaction is 3',5'-diiodothyronamine + iodide + A + H(+) = 3,3',5'-triiodothyronamine + AH2. It catalyses the reaction 3,3'-diiodothyronamine + iodide + A + H(+) = 3,3',5-triiodothyronamine + AH2. It carries out the reaction 3-iodothyronamine + iodide + A + H(+) = 3,5-diiodothyronamine + AH2. The enzyme catalyses 3'-iodothyronamine + iodide + A + H(+) = 3,3'-diiodothyronamine + AH2. The catalysed reaction is thyronamine + iodide + A + H(+) = 3-iodothyronamine + AH2. Its function is as follows. Plays a crucial role in the metabolism of thyroid hormones (TH) and has specific roles in TH activation and inactivation by deiodination. Catalyzes the deiodination of L-thyroxine (T4) to 3,3',5'-triiodothyronine (rT3) and 3,5,3'-triiodothyronine (T3) to 3,3'-diiodothyronine (3,3'-T2) via inner-ring deiodination (IRD). Catalyzes the deiodination of rT3 to 3',5'-diiodothyronine (3',5'-T2), 3,3'-T2 to 3'-monoiodothyronine (3'-T1) and 3,5-diiodothyronine (3,5-T2) to 3-monoiodothyronine (3-T1) via IRD. Catalyzes the deiodination of 3-T1 to L-thyronine (T0) via outer-ring deiodination (ORD). Catalyzes the tyrosyl ring deiodinations of 3,3',5,5'-tetraiodothyronamine, 3,3',5'-triiodothyronamine, 3,5,3'-triiodothyronamine, 3,5-diiodothyronamine, 3,3'-diiodothyronamine and 3-iodothyronamine. This is Thyroxine 5-deiodinase (DIO3) from Gallus gallus (Chicken).